Consider the following 124-residue polypeptide: Small ribosomal subunit protein uS12 (124 aa).

A disordered region spans residues 1–25 (MATINQLVRKPRQATTYKSASPALD). Residue Asp-89 is modified to 3-methylthioaspartic acid.

Belongs to the universal ribosomal protein uS12 family. Part of the 30S ribosomal subunit. Contacts proteins S8 and S17. May interact with IF1 in the 30S initiation complex.

Its function is as follows. With S4 and S5 plays an important role in translational accuracy. Interacts with and stabilizes bases of the 16S rRNA that are involved in tRNA selection in the A site and with the mRNA backbone. Located at the interface of the 30S and 50S subunits, it traverses the body of the 30S subunit contacting proteins on the other side and probably holding the rRNA structure together. The combined cluster of proteins S8, S12 and S17 appears to hold together the shoulder and platform of the 30S subunit. The chain is Small ribosomal subunit protein uS12 from Stenotrophomonas maltophilia (strain R551-3).